The primary structure comprises 295 residues: 3-methyl-2-oxobutanoate hydroxymethyltransferase (295 aa).

Mg(2+) contacts are provided by D53 and D92. Residues 53-54 (DS), D92, and K122 contribute to the 3-methyl-2-oxobutanoate site. E124 contributes to the Mg(2+) binding site. E191 (proton acceptor) is an active-site residue.

This sequence belongs to the PanB family. As to quaternary structure, homodecamer; pentamer of dimers. Requires Mg(2+) as cofactor.

It localises to the cytoplasm. It catalyses the reaction 3-methyl-2-oxobutanoate + (6R)-5,10-methylene-5,6,7,8-tetrahydrofolate + H2O = 2-dehydropantoate + (6S)-5,6,7,8-tetrahydrofolate. The protein operates within cofactor biosynthesis; (R)-pantothenate biosynthesis; (R)-pantoate from 3-methyl-2-oxobutanoate: step 1/2. Its function is as follows. Catalyzes the reversible reaction in which hydroxymethyl group from 5,10-methylenetetrahydrofolate is transferred onto alpha-ketoisovalerate to form ketopantoate. The sequence is that of 3-methyl-2-oxobutanoate hydroxymethyltransferase from Koribacter versatilis (strain Ellin345).